The primary structure comprises 234 residues: MLFIPKLFPAKLIRRYKRFLADVKRDDQDIFTVSVPNTGSMLGLITPNSNIWLSYHNNSKRKYVYQLEIVEANNSLVGINTTLPNKLALEAIQNGLLPELNGYKTILKEQRYGTQSRIDFLLRDDILPDCYLEVKNVHFIRQKELAEFPDTETKRGTRHLEELIKIVQQGKRAAMLYMIQREDCSAFTICRDLDPTYGRKFDLALKSGVEFYAVKCHVSVEGIFPIHRVKIEND.

This sequence belongs to the SfsA family.

This chain is Sugar fermentation stimulation protein homolog, found in Bartonella quintana (strain Toulouse) (Rochalimaea quintana).